Consider the following 81-residue polypeptide: Large ribosomal subunit protein bL27 (81 aa).

The segment covering 1 to 11 (MATSKSGGSSK) has biased composition (polar residues). A disordered region spans residues 1 to 23 (MATSKSGGSSKNGRDSISKRLGV).

It belongs to the bacterial ribosomal protein bL27 family.

The protein is Large ribosomal subunit protein bL27 of Borrelia garinii subsp. bavariensis (strain ATCC BAA-2496 / DSM 23469 / PBi) (Borreliella bavariensis).